The primary structure comprises 2025 residues: Pericentriolar material 1 protein (2025 aa).

The disordered stretch occupies residues 1 to 91 (MATGGGPFEE…TFPHSRYMTQ (91 aa)). The residue at position 2 (Ala-2) is an N-acetylalanine. The interval 2-1458 (ATGGGPFEEV…TWVASNSELT (1457 aa)) is mediates interaction with DZIP1. Residues Ser-65, Ser-68, Ser-69, Ser-93, Ser-110, Ser-116, Ser-119, and Ser-159 each carry the phosphoserine modification. The interval 111-140 (DLDQRSIGSDSQGRATAANNKRQLSENRKP) is disordered. Over residues 116–132 (SIGSDSQGRATAANNKR) the composition is skewed to polar residues. Positions 218-301 (KASSMREDLV…QLRALQGRQA (84 aa)) form a coiled coil. Residues 354-390 (RDSQPPAVPDNRRQAESLSLTREISQSRNPSVSEHLP) are disordered. Polar residues predominate over residues 369–385 (ESLSLTREISQSRNPSV). Ser-370 is subject to Phosphoserine. Ser-372 carries the post-translational modification Phosphoserine; by PLK4. Ser-384 is subject to Phosphoserine. Lys-399 carries the N6-acetyllysine modification. Coiled coils occupy residues 399-426 (KMRVLQEKKQKMDKLLGELHNLRDQHLN) and 492-518 (AEKLQKLNEVQKRLNELRELVHYYEQT). 2 disordered regions span residues 528–553 (ENTKDEETEESEYDSEHENSEPVTNI) and 565–586 (VNTNSNTQCGSNNRDGRPVNSN). Over residues 531 to 540 (KDEETEESEY) the composition is skewed to acidic residues. A Phosphoserine modification is found at Ser-593. Residues 620–654 (AHGEDEEEEVEEEGVSGASLSSRRSSLVDEAPEDE) are disordered. Residues 623 to 633 (EDEEEEVEEEG) are compositionally biased toward acidic residues. Residues 634-644 (VSGASLSSRRS) are compositionally biased toward low complexity. Ser-644 is subject to Phosphoserine. Coiled coils occupy residues 652–772 (EDEE…PDLQ) and 822–856 (SDMRRHEMLREELRQRRKQLEALMAEHQRRQGLAE). A Phosphothreonine modification is found at Thr-857. Residues Ser-859, Ser-864, Ser-867, and Ser-870 each carry the phosphoserine modification. 2 disordered regions span residues 866-885 (RSDGSENLCTPQQSRTEKTM) and 913-940 (TDEEEEEEQDASSNDNFPIYPPSMNQNS). The span at 870-879 (SENLCTPQQS) shows a compositional bias: polar residues. Position 875 is a phosphothreonine (Thr-875). 4 positions are modified to phosphoserine: Ser-957, Ser-974, Ser-985, and Ser-988. Coiled-coil stretches lie at residues 985–1017 (SELSYIEEKEQWQEQINQLKKQLDFSVNICQTL) and 1061–1086 (QLTWQQNNVQRLKQMLTELMRQQNQH). Disordered stretches follow at residues 1081–1105 (RQQNQHPEKPRSKERGSSASHPSSP) and 1149–1213 (FSQN…YDQE). Residues 1086-1096 (HPEKPRSKERG) are compositionally biased toward basic and acidic residues. Residues 1149 to 1169 (FSQNVSTPTEQQQPLAQNPSG) show a composition bias toward polar residues. 2 positions are modified to phosphoserine: Ser-1182 and Ser-1185. The span at 1189–1198 (EKQRNQKQPE) shows a compositional bias: basic and acidic residues. A phosphoserine mark is found at Ser-1228, Ser-1254, Ser-1257, Ser-1259, and Ser-1260. Residues 1230-1310 (EKATNSNRKN…STQLKSRVKN (81 aa)) form a disordered region. A compositionally biased stretch (polar residues) spans 1268-1285 (TTVTKTFKTRKASAQASL). Phosphoserine occurs at positions 1315 and 1317. Residues 1319–1338 (SSTCEPCKNRNRHSAQTEEP) are disordered. Position 1466 is a phosphothreonine (Thr-1466). Phosphoserine occurs at positions 1571, 1695, 1729, 1766, 1769, 1777, and 1783. The segment at 1720–1943 (KRILEGDHGS…AGSPDTESPV (224 aa)) is disordered. The span at 1756–1768 (YDAKGPKNVRSDV) shows a compositional bias: basic and acidic residues. Residues 1784–1798 (INLSKAESQALTNYG) are compositionally biased toward polar residues. The span at 1800–1816 (GEDENEDEEMEDFEESP) shows a compositional bias: acidic residues. Polar residues-rich tracts occupy residues 1818–1828 (DIQTSLQANTE), 1849–1858 (ESTNVPSDQE), 1879–1901 (ENEQQLNSATHKDSLTTTDSSKQ), and 1925–1934 (AQETPESSLA). Phosphoserine is present on residues Ser-1959 and Ser-1978.

It belongs to the PCM1 family. Self-associates. Interacts with BBS4, BBS8, CETN3, HAP1, NDE1, NDEL1, MAP1LC3B, GABARAPAL2, and GABARAP. Interacts with CEP131; the interaction increases in response to ultraviolet light (UV) radiation. Associates with microtubule; association to microtubule is reduced in response to cellular stress, such as ultraviolet light (UV) radiation or heat shock, in a process that requires p38 MAP kinase signaling. Interacts with C2CD3. Interacts with CFAP263. Interacts with SSX2IP. Interacts with CCDC13. Interacts with CEP290. Interacts with PARD6A. Interacts with KIAA0753/OFIP, CEP20/FOR20 and OFD1; the interaction with CEP20/FOR20 and OFD1 may be mediated by KIAA0753/OFIP. Interacts with CCDC66. Interacts with CCDC61. Interacts with DZIP1; localizes DZIP1 and the associated BBSome to centriolar satellite. Interacts with CSTPP1, TTLL1, TPGS1 and LRRC49. Interacts with CFAP53. Post-translationally, ubiquitinated. Undergoes monoubiquitination catalyzed by the E3 ubiquitin-protein ligase MIB1 in proliferating cells, preventing cilia formation. Monoubiquitination by MIB1 is inhibited in response to cellular stress, such as ultraviolet light (UV) radiation or heat shock, resulting in cilia formation initiation. In terms of processing, phosphorylated on multiple serine and threonine residues by DYRK3 during the G2-to-M transition, after the nuclear-envelope breakdown. Phosphorylation by DYRK3 promotes disassembly of pericentriolar material. Phosphorylation at Ser-372 mediated by PLK4 is required to maintain the integrity of centriolar satellites. Expressed in the hippocampus and dentate gyrus, the columnar epithelial cells of bronchioles, the olfactory epithelium, the pericardium and the inner segment of the retina.

The protein localises to the cytoplasm. It is found in the cytoskeleton. Its subcellular location is the microtubule organizing center. The protein resides in the centrosome. It localises to the cytoplasmic granule. The protein localises to the centriolar satellite. It is found in the cilium basal body. Its function is as follows. Required for centrosome assembly and function. Essential for the correct localization of several centrosomal proteins including CEP250, CETN3, PCNT and NEK2. Required to anchor microtubules to the centrosome. Also involved in cilium biogenesis by recruiting the BBSome, a ciliary protein complex involved in cilium biogenesis, to the centriolar satellites. Recruits the tubulin polyglutamylase complex (TPGC) to centriolar satellites. The polypeptide is Pericentriolar material 1 protein (Mus musculus (Mouse)).